Here is a 179-residue protein sequence, read N- to C-terminus: Caveolin-1 (179 aa).

Residue S2 is modified to N-acetylserine. Position 2 is a phosphoserine (S2). Residues 2–95 (SGGKYVDSEG…WKASFTTFTV (94 aa)) are required for homooligomerization. Residues 2-105 (SGGKYVDSEG…TKYWFYRLLS (104 aa)) are Cytoplasmic-facing. K5 carries the post-translational modification N6-acetyllysine; alternate. K5 is covalently cross-linked (Glycyl lysine isopeptide (Lys-Gly) (interchain with G-Cter in ubiquitin); alternate). Residue Y6 is modified to Phosphotyrosine. S9 is modified (phosphoserine). Phosphotyrosine; by ABL1 is present on Y14. Y25 carries the phosphotyrosine modification. Residues K26 and K30 each participate in a glycyl lysine isopeptide (Lys-Gly) (interchain with G-Cter in ubiquitin) cross-link. Phosphoserine is present on S37. Residues K39, K48, and K58 each participate in a glycyl lysine isopeptide (Lys-Gly) (interchain with G-Cter in ubiquitin) cross-link. The tract at residues 83–95 (DGIWKASFTTFTV) is interaction with CAVIN3. An intramembrane region (helical) is located at residues 106-126 (ALFGIPMALIWGIYFAILSFL). The Cytoplasmic segment spans residues 127–179 (HIWAVVPCIKSFLIEIQCISRVYSIYVHTFCDPLFEAIGKVFSNIRINMQKEI). The tract at residues 132–143 (VPCIKSFLIEIQ) is interacts with SPRY1, SPRY2, SPRY3 and SPRY4. Residues C134, C144, and C157 are each lipidated (S-palmitoyl cysteine). Residues 150–161 (SIYVHTFCDPLF) are interacts with SPRY1, SPRY2, and SPRY4. An interacts with SPRY1, SPRY2, SPRY3 and SPRY4 region spans residues 168 to 179 (FSNIRINMQKEI).

The protein belongs to the caveolin family. As to quaternary structure, homooligomer. Interacts with GLIPR2. Interacts with NOSTRIN. Interacts with SNAP25 and STX1A. Interacts (via the N-terminus) with DPP4; the interaction is direct. Interacts with CTNNB1, CDH1 and JUP. Interacts with PACSIN2; this interaction induces membrane tubulation. Interacts with SLC7A9. Interacts with BMX and BTK. Interacts with TGFBR1. Interacts with CAVIN3 (via leucine-zipper domain) in a cholesterol-sensitive manner. Interacts with CAVIN1. Interacts with EHD2 in a cholesterol-dependent manner. Forms a ternary complex with UBXN6 and VCP; mediates CAV1 targeting to lysosomes for degradation. Interacts with ABCG1; this interaction regulates ABCG1-mediated cholesterol efflux. Interacts with NEU3; this interaction enhances NEU3 sialidase activity within caveola. Interacts (via C-terminus) with SPRY1, SPRY2 (via C-terminus), SPRY3, and SPRY4. Interacts with IGFBP5; this interaction allows trafficking of IGFBP5 from the plasma membrane to the nucleus. Post-translationally, phosphorylated at Tyr-14 by ABL1 in response to oxidative stress. Ubiquitinated. Undergo monoubiquitination and multi- and/or polyubiquitination. Monoubiquitination of N-terminal lysines promotes integration in a ternary complex with UBXN6 and VCP which promotes oligomeric CAV1 targeting to lysosomes for degradation. Ubiquitinated by ZNRF1; leading to degradation and modulation of the TLR4-mediated immune response.

It localises to the golgi apparatus membrane. The protein resides in the cell membrane. It is found in the membrane. The protein localises to the caveola. Its subcellular location is the membrane raft. In terms of biological role, may act as a scaffolding protein within caveolar membranes. Forms a stable heterooligomeric complex with CAV2 that targets to lipid rafts and drives caveolae formation. Mediates the recruitment of CAVIN proteins (CAVIN1/2/3/4) to the caveolae. Interacts directly with G-protein alpha subunits and can functionally regulate their activity. Involved in the costimulatory signal essential for T-cell receptor (TCR)-mediated T-cell activation. Its binding to DPP4 induces T-cell proliferation and NF-kappa-B activation in a T-cell receptor/CD3-dependent manner. Recruits CTNNB1 to caveolar membranes and may regulate CTNNB1-mediated signaling through the Wnt pathway. Negatively regulates TGFB1-mediated activation of SMAD2/3 by mediating the internalization of TGFBR1 from membrane rafts leading to its subsequent degradation. Binds 20(S)-hydroxycholesterol (20(S)-OHC). The protein is Caveolin-1 (CAV1) of Eulemur macaco macaco (Black lemur).